The sequence spans 188 residues: Elongation factor P (188 aa).

Lys-34 is subject to N6-(3,6-diaminohexanoyl)-5-hydroxylysine.

This sequence belongs to the elongation factor P family. May be beta-lysylated on the epsilon-amino group of Lys-34 by the combined action of EpmA and EpmB, and then hydroxylated on the C5 position of the same residue by EpmC (if this protein is present). Lysylation is critical for the stimulatory effect of EF-P on peptide-bond formation. The lysylation moiety may extend toward the peptidyltransferase center and stabilize the terminal 3-CCA end of the tRNA. Hydroxylation of the C5 position on Lys-34 may allow additional potential stabilizing hydrogen-bond interactions with the P-tRNA.

It localises to the cytoplasm. The protein operates within protein biosynthesis; polypeptide chain elongation. Involved in peptide bond synthesis. Alleviates ribosome stalling that occurs when 3 or more consecutive Pro residues or the sequence PPG is present in a protein, possibly by augmenting the peptidyl transferase activity of the ribosome. Modification of Lys-34 is required for alleviation. This Coxiella burnetii (strain CbuG_Q212) (Coxiella burnetii (strain Q212)) protein is Elongation factor P.